The primary structure comprises 326 residues: Mitochondrial glycine transporter (326 aa).

Solcar repeat units lie at residues 22 to 106, 135 to 216, and 228 to 312; these read SKTT…LRTS, SANL…LKRY, and SSSS…LILR. Helical transmembrane passes span 28-53, 81-107, 138-163, 191-214, 232-258, and 287-305; these read FGAG…TRVQ, GTLP…RTSL, LATG…VRYE, GFGA…EQLK, INFV…KTRL, and GLGL…AWTV.

It belongs to the mitochondrial carrier (TC 2.A.29) family. SLC25A38 subfamily.

It localises to the mitochondrion inner membrane. The enzyme catalyses glycine(in) = glycine(out). Its function is as follows. Mitochondrial glycine transporter that imports glycine into the mitochondrial matrix. Plays an important role in providing glycine for the first enzymatic step in heme biosynthesis, the condensation of glycine with succinyl-CoA to produce 5-aminolevulinate (ALA) in the mitochondrial matrix. This is Mitochondrial glycine transporter from Emericella nidulans (strain FGSC A4 / ATCC 38163 / CBS 112.46 / NRRL 194 / M139) (Aspergillus nidulans).